A 908-amino-acid polypeptide reads, in one-letter code: Probable serine/threonine-protein kinase DDB_G0278521 (908 aa).

Topologically, residues 1–153 (MSNNKIIESL…RGEKLSTLDR (153 aa)) are extracellular. A helical transmembrane segment spans residues 154–174 (IICFSIIYSQDQILLFLLNFI). Residues 175-908 (LSNINCNNNN…SDQNDSDLYD (734 aa)) lie on the Cytoplasmic side of the membrane. ANK repeat units follow at residues 258-289 (LKVY…NVYN), 300-326 (TNRS…NIHD), 330-361 (KGML…ALDQ), 362-391 (SNNT…RLSI), and 395-424 (NGRY…KMNS). Low complexity predominate over residues 461 to 472 (NSNNLTNSNSSS). Residues 461 to 491 (NSNNLTNSNSSSVGGLRISNGGNTQQQSIQI) form a disordered region. Positions 480 to 490 (NGGNTQQQSIQ) are enriched in polar residues. Residues 495–524 (ENNTPIDLLVLNNHFTIAIELLKYEGYIVG) form an ANK 6 repeat. One can recognise a Protein kinase domain in the interval 530–817 (FKTARKIGAG…LPIANIPKFL (288 aa)). ATP is bound by residues 536 to 544 (IGAGAFGDV) and lysine 557. The Proton acceptor role is filled by aspartate 677.

This sequence belongs to the protein kinase superfamily. TKL Ser/Thr protein kinase family.

It localises to the membrane. It catalyses the reaction L-seryl-[protein] + ATP = O-phospho-L-seryl-[protein] + ADP + H(+). It carries out the reaction L-threonyl-[protein] + ATP = O-phospho-L-threonyl-[protein] + ADP + H(+). The protein is Probable serine/threonine-protein kinase DDB_G0278521 of Dictyostelium discoideum (Social amoeba).